The sequence spans 134 residues: Profilin-4 (134 aa).

Belongs to the profilin family. In terms of assembly, occurs in many kinds of cells as a complex with monomeric actin in a 1:1 ratio. Specifically expressed in mature and germinating pollen grains, and growing pollen tubes (at protein level).

The protein resides in the cytoplasm. It is found in the cytoskeleton. Functionally, binds to actin monomers and regulates the organization of the actin cytoskeleton. At high concentrations, profilin prevents the polymerization of actin, whereas it enhances it at low concentrations. At low concentrations, associates with the poly-proline motif of formins to enhance actin filament elongation rate. Acts redundantly with PRF5 to regulate apical actin polymerization at the tip of pollen tube and control polarized pollen tube growth. Functions probably by favoring formin-mediated actin polymerization at pollen tube tips. In Arabidopsis thaliana (Mouse-ear cress), this protein is Profilin-4.